We begin with the raw amino-acid sequence, 202 residues long: DNA polymerase III subunit epsilon (202 aa).

Asp23 and Glu25 together coordinate a divalent metal cation. Asp23 and Glu25 together coordinate substrate. The active-site Proton acceptor is His162. Asp167 is an a divalent metal cation binding site. Asp167 contacts substrate.

As to quaternary structure, DNA polymerase III contains a core (composed of alpha, epsilon and theta chains) that associates with a tau subunit. This core dimerizes to form the POLIII' complex. PolIII' associates with the gamma complex (composed of gamma, delta, delta', psi and chi chains) and with the beta chain to form the complete DNA polymerase III complex. The cofactor is Mg(2+). Mn(2+) is required as a cofactor.

The catalysed reaction is DNA(n) + a 2'-deoxyribonucleoside 5'-triphosphate = DNA(n+1) + diphosphate. Functionally, DNA polymerase III is a complex, multichain enzyme responsible for most of the replicative synthesis in bacteria. The epsilon subunit contain the editing function and is a proofreading 3'-5' exonuclease. The protein is DNA polymerase III subunit epsilon (dnaQ) of Aquifex aeolicus (strain VF5).